A 300-amino-acid chain; its full sequence is Lysenin-related protein 1 (300 aa).

An N-terminal cap domain region spans residues 12-35 (EEIEVDVVSVWKEGYAYENRGNSS). Residues 36–109 (VQQKITMTKG…SQVIEHTVTI (74 aa)) form a beta-hairpin domain region. The tract at residues 110 to 158 (PPNKKFTRWKLNADVGGTGIEYMYLIDEVTAIGADLTIPEVNKSRAKIL) is N-terminal cap domain. The interval 159–299 (VGRQIHLGET…EDKWILEVVN (141 aa)) is C-terminal receptor-binding domain. An N-(acyl)-sphingosylphosphocholine-binding residues include Lys187, Ser229, Tyr235, and Tyr284. The cysteines at positions 274 and 285 are disulfide-linked.

It belongs to the lysenin family. In terms of assembly, binds to sphingomyelin as a monomer by using its C-terminal domain. Forms a nonamer when sphingomyelin/LRP-1 ratio is lower than ca 500. Oligomerization, but not binding, is influenced by the fluidity of sphingomyelin. In terms of tissue distribution, expressed by coelomocytes.

The protein localises to the secreted. It localises to the target cell membrane. In terms of biological role, pore-forming toxin that specifically binds sphingomyelin in the plasma membrane of various cells. Has hemolytic activity. Binding and hemolytic activities of this toxin are 10 times less than those of lysenin and lysenin-related protein 2. The protein is Lysenin-related protein 1 of Eisenia fetida (Red wiggler worm).